An 868-amino-acid polypeptide reads, in one-letter code: Translation initiation factor IF-2 (868 aa).

A disordered region spans residues 201-269; sequence KEEVKPEKVS…GTEKSDKYRE (69 aa). Residues 249-260 are compositionally biased toward basic residues; the sequence is RGGRSKFKKKKG. Residues 368–537 form the tr-type G domain; it reads GRAPVVTIMG…LLQSEVLELK (170 aa). Residues 377–384 are G1; that stretch reads GHVDHGKT. 377 to 384 serves as a coordination point for GTP; it reads GHVDHGKT. The tract at residues 402–406 is G2; the sequence is GITQH. The G3 stretch occupies residues 423-426; it reads DTPG. Residues 423-427 and 477-480 each bind GTP; these read DTPGH and NKMD. The G4 stretch occupies residues 477–480; it reads NKMD. A G5 region spans residues 513–515; sequence SAK.

Belongs to the TRAFAC class translation factor GTPase superfamily. Classic translation factor GTPase family. IF-2 subfamily.

It localises to the cytoplasm. One of the essential components for the initiation of protein synthesis. Protects formylmethionyl-tRNA from spontaneous hydrolysis and promotes its binding to the 30S ribosomal subunits. Also involved in the hydrolysis of GTP during the formation of the 70S ribosomal complex. The polypeptide is Translation initiation factor IF-2 (Legionella pneumophila (strain Corby)).